Consider the following 786-residue polypeptide: Endonuclease MutS2 (786 aa).

Glycine 332–threonine 339 contacts ATP. A Smr domain is found at isoleucine 711–lysine 786.

This sequence belongs to the DNA mismatch repair MutS family. MutS2 subfamily. Homodimer. Binds to stalled ribosomes, contacting rRNA.

Endonuclease that is involved in the suppression of homologous recombination and thus may have a key role in the control of bacterial genetic diversity. In terms of biological role, acts as a ribosome collision sensor, splitting the ribosome into its 2 subunits. Detects stalled/collided 70S ribosomes which it binds and splits by an ATP-hydrolysis driven conformational change. Acts upstream of the ribosome quality control system (RQC), a ribosome-associated complex that mediates the extraction of incompletely synthesized nascent chains from stalled ribosomes and their subsequent degradation. Probably generates substrates for RQC. This Clostridium perfringens (strain SM101 / Type A) protein is Endonuclease MutS2.